Reading from the N-terminus, the 146-residue chain is Phospholipase A2, membrane associated (146 aa).

The signal sequence occupies residues 1–21 (MKVLLLLAVVIMAFGSIQVQG). 7 cysteine pairs are disulfide-bonded: C47–C139, C49–C65, C64–C119, C70–C146, C71–C112, C80–C105, and C98–C110. Residues H48, G50, and G52 each coordinate Ca(2+). H68 is a catalytic residue. Ca(2+) is bound at residue D69. D113 is a catalytic residue.

The protein belongs to the phospholipase A2 family. It depends on Ca(2+) as a cofactor.

It is found in the secreted. It localises to the cell membrane. Its subcellular location is the mitochondrion outer membrane. It carries out the reaction a 1,2-diacyl-sn-glycero-3-phosphoethanolamine + H2O = a 1-acyl-sn-glycero-3-phosphoethanolamine + a fatty acid + H(+). It catalyses the reaction 1-hexadecanoyl-2-(9Z-octadecenoyl)-sn-glycero-3-phosphoethanolamine + H2O = 1-hexadecanoyl-sn-glycero-3-phosphoethanolamine + (9Z)-octadecenoate + H(+). The enzyme catalyses 1-hexadecanoyl-2-(9Z,12Z-octadecadienoyl)-sn-glycero-3-phosphoethanolamine + H2O = 1-hexadecanoyl-sn-glycero-3-phosphoethanolamine + (9Z,12Z)-octadecadienoate + H(+). The catalysed reaction is 1-hexadecanoyl-2-(5Z,8Z,11Z,14Z-eicosatetraenoyl)-sn-glycero-3-phosphoethanolamine + H2O = 1-hexadecanoyl-sn-glycero-3-phosphoethanolamine + (5Z,8Z,11Z,14Z)-eicosatetraenoate + H(+). It carries out the reaction N-hexadecanoyl-1,2-di-(9Z-octadecenoyl)-sn-glycero-3-phosphoethanolamine + H2O = N-hexadecanoyl-1-(9Z-octadecenoyl)-sn-glycero-3-phosphoethanolamine + (9Z)-octadecenoate + H(+). It catalyses the reaction 1,2-dihexadecanoyl-sn-glycero-3-phospho-(1'-sn-glycerol) + H2O = 1-hexadecanoyl-sn-glycero-3-phospho-(1'-sn-glycerol) + hexadecanoate + H(+). The enzyme catalyses 1-hexadecanoyl-2-(9Z-octadecenoyl)-sn-glycero-3-phosphoglycerol + H2O = 1-hexadecanoyl-sn-glycero-3-phosphoglycerol + (9Z)-octadecenoate + H(+). The catalysed reaction is 1-hexadecanoyl-2-(9Z-octadecenoyl)-sn-glycero-3-phospho-(1'-sn-glycerol) + H2O = 1-hexadecanoyl-sn-glycero-3-phospho-(1'-sn-glycerol) + (9Z)-octadecenoate + H(+). It carries out the reaction a 1,2-diacyl-sn-glycero-3-phosphocholine + H2O = a 1-acyl-sn-glycero-3-phosphocholine + a fatty acid + H(+). It catalyses the reaction 1,2-dihexadecanoyl-sn-glycero-3-phosphocholine + H2O = 1-hexadecanoyl-sn-glycero-3-phosphocholine + hexadecanoate + H(+). The enzyme catalyses 1-hexadecanoyl-2-(9Z-octadecenoyl)-sn-glycero-3-phosphocholine + H2O = 1-hexadecanoyl-sn-glycero-3-phosphocholine + (9Z)-octadecenoate + H(+). The catalysed reaction is 1-hexadecanoyl-2-(9Z,12Z-octadecadienoyl)-sn-glycero-3-phosphocholine + H2O = (9Z,12Z)-octadecadienoate + 1-hexadecanoyl-sn-glycero-3-phosphocholine + H(+). It carries out the reaction 1-hexadecanoyl-2-(4Z,7Z,10Z,13Z,16Z,19Z-docosahexaenoyl)-sn-glycero-3-phosphocholine + H2O = (4Z,7Z,10Z,13Z,16Z,19Z)-docosahexaenoate + 1-hexadecanoyl-sn-glycero-3-phosphocholine + H(+). Its function is as follows. Secretory calcium-dependent phospholipase A2 that primarily targets extracellular phospholipids with implications in host antimicrobial defense, inflammatory response and tissue regeneration. Hydrolyzes the ester bond of the fatty acyl group attached at sn-2 position of phospholipids (phospholipase A2 activity) with preference for phosphatidylethanolamines and phosphatidylglycerols over phosphatidylcholines. Contributes to lipid remodeling of cellular membranes and generation of lipid mediators involved in pathogen clearance. Displays bactericidal activity against Gram-positive bacteria by directly hydrolyzing phospholipids of the bacterial membrane. Upon sterile inflammation, targets membrane phospholipids of extracellular mitochondria released from activated platelets, generating free unsaturated fatty acids such as arachidonate that is used by neighboring leukocytes to synthesize inflammatory eicosanoids such as leukotrienes. Simultaneously, by compromising mitochondrial membrane integrity, promotes the release in circulation of potent damage-associated molecular pattern molecules that activate the innate immune response. Plays a stem cell regulator role in the intestinal crypt. Within intracellular compartment mediates Paneth cell differentiation and its stem cell supporting functions by inhibiting Wnt signaling pathway in intestinal stem cell (ICS). Secreted in the intestinal lumen upon inflammation, acts in an autocrine way and promotes prostaglandin E2 synthesis that stimulates Wnt signaling pathway in ICS cells and tissue regeneration. May play a role in the biosynthesis of N-acyl ethanolamines that regulate energy metabolism and inflammation. Hydrolyzes N-acyl phosphatidylethanolamines to N-acyl lysophosphatidylethanolamines, which are further cleaved by a lysophospholipase D to release N-acyl ethanolamines. Independent of its catalytic activity, acts as a ligand for integrins. Binds to and activates integrins ITGAV:ITGB3, ITGA4:ITGB1 and ITGA5:ITGB1. Binds to a site (site 2) which is distinct from the classical ligand-binding site (site 1) and induces integrin conformational changes and enhanced ligand binding to site 1. Induces cell proliferation in an integrin-dependent manner. The sequence is that of Phospholipase A2, membrane associated (Pla2g2a) from Rattus norvegicus (Rat).